A 405-amino-acid polypeptide reads, in one-letter code: CCA-adding enzyme (405 aa).

Glycine 8 and arginine 11 together coordinate ATP. CTP contacts are provided by glycine 8 and arginine 11. The Mg(2+) site is built by glutamate 21 and aspartate 23. ATP is bound by residues arginine 91, arginine 137, and arginine 140. CTP is bound by residues arginine 91, arginine 137, and arginine 140. Residues 220-326 (PLSHGLSTLS…LNFFDELDLW (107 aa)) enclose the HD domain.

It belongs to the tRNA nucleotidyltransferase/poly(A) polymerase family. Bacterial CCA-adding enzyme type 2 subfamily. Mg(2+) serves as cofactor.

It catalyses the reaction a tRNA precursor + 2 CTP + ATP = a tRNA with a 3' CCA end + 3 diphosphate. The enzyme catalyses a tRNA with a 3' CCA end + 2 CTP + ATP = a tRNA with a 3' CCACCA end + 3 diphosphate. Functionally, catalyzes the addition and repair of the essential 3'-terminal CCA sequence in tRNAs without using a nucleic acid template. Adds these three nucleotides in the order of C, C, and A to the tRNA nucleotide-73, using CTP and ATP as substrates and producing inorganic pyrophosphate. tRNA 3'-terminal CCA addition is required both for tRNA processing and repair. Also involved in tRNA surveillance by mediating tandem CCA addition to generate a CCACCA at the 3' terminus of unstable tRNAs. While stable tRNAs receive only 3'-terminal CCA, unstable tRNAs are marked with CCACCA and rapidly degraded. In Hamiltonella defensa subsp. Acyrthosiphon pisum (strain 5AT), this protein is CCA-adding enzyme.